The primary structure comprises 117 residues: Hydrogenase maturation factor HypA (117 aa).

Histidine 2 serves as a coordination point for Ni(2+). Residues cysteine 74, cysteine 77, cysteine 91, and cysteine 94 each coordinate Zn(2+).

Belongs to the HypA/HybF family.

Its function is as follows. Involved in the maturation of [NiFe] hydrogenases. Required for nickel insertion into the metal center of the hydrogenase. The chain is Hydrogenase maturation factor HypA from Helicobacter pylori (strain J99 / ATCC 700824) (Campylobacter pylori J99).